The following is a 95-amino-acid chain: Small ribosomal subunit protein bS6 (95 aa).

This sequence belongs to the bacterial ribosomal protein bS6 family.

Its function is as follows. Binds together with bS18 to 16S ribosomal RNA. The polypeptide is Small ribosomal subunit protein bS6 (Caldanaerobacter subterraneus subsp. tengcongensis (strain DSM 15242 / JCM 11007 / NBRC 100824 / MB4) (Thermoanaerobacter tengcongensis)).